The following is a 454-amino-acid chain: Tegument protein VP16 homolog (454 aa).

The protein belongs to the herpesviridae tegument protein VP16 protein family. As to quaternary structure, associates with the VP16-induced complex; binding to host HCFC1 activates VP16 for association with the octamer motif-binding host protein POU2F1, to form a multiprotein-DNA complex responsible for activating transcription of the viral immediate early genes.

Its subcellular location is the virion tegument. It localises to the host nucleus. Its function is as follows. Transcriptional activator of immediate-early (IE) gene products (alpha genes). Acts as a key activator of lytic infection by initiating the lytic program through the assembly of the transcriptional regulatory VP16-induced complex composed of VP16 and two cellular factors, HCFC1 and POU2F1. VP16-induced complex represents a regulatory switch: when it is on, it promotes IE-gene expression and thus lytic infection, and when it is off, it limits IE-gene transcription favoring latent infection. May play a role in the aggregation of tegument proteins around nucleocapsids during virus morphogenesis. The polypeptide is Tegument protein VP16 homolog (12) (Equine herpesvirus 4 (strain 1942) (EHV-4)).